The chain runs to 320 residues: Polyisoprenyl-teichoic acid--peptidoglycan teichoic acid transferase TagU (320 aa).

The Cytoplasmic segment spans residues 1-15 (MVSRTERKQHKKRRK). Residues 16 to 36 (WPFWLGGILLVLLLLISGGIF) traverse the membrane as a helical; Signal-anchor for type II membrane protein segment. At 37–320 (LIYNQVGAVV…SEITGHMQEQ (284 aa)) the chain is on the extracellular side.

Belongs to the LytR/CpsA/Psr (LCP) family.

The protein localises to the cell membrane. Its pathway is cell wall biogenesis. Its function is as follows. May catalyze the final step in cell wall teichoic acid biosynthesis, the transfer of the anionic cell wall polymers (APs) from their lipid-linked precursor to the cell wall peptidoglycan (PG). The chain is Polyisoprenyl-teichoic acid--peptidoglycan teichoic acid transferase TagU from Oceanobacillus iheyensis (strain DSM 14371 / CIP 107618 / JCM 11309 / KCTC 3954 / HTE831).